The chain runs to 158 residues: Disease resistance response protein Pi49 (158 aa).

It belongs to the BetVI family.

The chain is Disease resistance response protein Pi49 (DRR49A) from Pisum sativum (Garden pea).